The primary structure comprises 178 residues: Acireductone dioxygenase (178 aa).

Residues His100, His102, Glu106, and His145 each coordinate Fe(2+). Ni(2+) contacts are provided by His100, His102, Glu106, and His145.

The protein belongs to the acireductone dioxygenase (ARD) family. As to quaternary structure, monomer. Fe(2+) is required as a cofactor. The cofactor is Ni(2+).

It carries out the reaction 1,2-dihydroxy-5-(methylsulfanyl)pent-1-en-3-one + O2 = 3-(methylsulfanyl)propanoate + CO + formate + 2 H(+). The enzyme catalyses 1,2-dihydroxy-5-(methylsulfanyl)pent-1-en-3-one + O2 = 4-methylsulfanyl-2-oxobutanoate + formate + 2 H(+). It participates in amino-acid biosynthesis; L-methionine biosynthesis via salvage pathway; L-methionine from S-methyl-5-thio-alpha-D-ribose 1-phosphate: step 5/6. Catalyzes 2 different reactions between oxygen and the acireductone 1,2-dihydroxy-3-keto-5-methylthiopentene (DHK-MTPene) depending upon the metal bound in the active site. Fe-containing acireductone dioxygenase (Fe-ARD) produces formate and 2-keto-4-methylthiobutyrate (KMTB), the alpha-ketoacid precursor of methionine in the methionine recycle pathway. Ni-containing acireductone dioxygenase (Ni-ARD) produces methylthiopropionate, carbon monoxide and formate, and does not lie on the methionine recycle pathway. In Bacillus subtilis (strain 168), this protein is Acireductone dioxygenase (mtnD).